The chain runs to 478 residues: ATP synthase subunit beta (478 aa).

160–167 is an ATP binding site; that stretch reads GGAGVGKT.

It belongs to the ATPase alpha/beta chains family. As to quaternary structure, F-type ATPases have 2 components, CF(1) - the catalytic core - and CF(0) - the membrane proton channel. CF(1) has five subunits: alpha(3), beta(3), gamma(1), delta(1), epsilon(1). CF(0) has three main subunits: a(1), b(2) and c(9-12). The alpha and beta chains form an alternating ring which encloses part of the gamma chain. CF(1) is attached to CF(0) by a central stalk formed by the gamma and epsilon chains, while a peripheral stalk is formed by the delta and b chains.

Its subcellular location is the cell inner membrane. The enzyme catalyses ATP + H2O + 4 H(+)(in) = ADP + phosphate + 5 H(+)(out). In terms of biological role, produces ATP from ADP in the presence of a proton gradient across the membrane. The catalytic sites are hosted primarily by the beta subunits. The polypeptide is ATP synthase subunit beta (Orientia tsutsugamushi (strain Ikeda) (Rickettsia tsutsugamushi)).